A 436-amino-acid chain; its full sequence is Xylose isomerase (436 aa).

Mg(2+) is bound by residues D306 and D308.

It belongs to the xylose isomerase family. Homotetramer. Mg(2+) is required as a cofactor.

The protein resides in the cytoplasm. The enzyme catalyses alpha-D-xylose = alpha-D-xylulofuranose. This chain is Xylose isomerase, found in Sinorhizobium fredii (strain NBRC 101917 / NGR234).